A 286-amino-acid chain; its full sequence is uncharacterized protein (286 aa).

The Integrase catalytic domain maps to 1–146 (MSRYKKDNDG…KPVDVERGDF (146 aa)). The span at 252-263 (RKVKAKKGKKDK) shows a compositional bias: basic residues. Residues 252-286 (RKVKAKKGKKDKKLKESKKSDDTSTGASTGSSIAM) form a disordered region. Over residues 264-273 (KLKESKKSDD) the composition is skewed to basic and acidic residues. The segment covering 274–286 (TSTGASTGSSIAM) has biased composition (low complexity).

This is an uncharacterized protein from Caenorhabditis elegans.